The chain runs to 921 residues: Isoleucine--tRNA ligase (921 aa).

The 'HIGH' region signature appears at 59–69 (PYANGHLHIGH). E569 contributes to the L-isoleucyl-5'-AMP binding site. The 'KMSKS' region motif lies at 610 to 614 (KMSKS). Residue K613 participates in ATP binding. The Zn(2+) site is built by C894, C897, C909, and C912.

It belongs to the class-I aminoacyl-tRNA synthetase family. IleS type 1 subfamily. Monomer. Zn(2+) serves as cofactor.

Its subcellular location is the cytoplasm. The enzyme catalyses tRNA(Ile) + L-isoleucine + ATP = L-isoleucyl-tRNA(Ile) + AMP + diphosphate. Functionally, catalyzes the attachment of isoleucine to tRNA(Ile). As IleRS can inadvertently accommodate and process structurally similar amino acids such as valine, to avoid such errors it has two additional distinct tRNA(Ile)-dependent editing activities. One activity is designated as 'pretransfer' editing and involves the hydrolysis of activated Val-AMP. The other activity is designated 'posttransfer' editing and involves deacylation of mischarged Val-tRNA(Ile). This Campylobacter lari (strain RM2100 / D67 / ATCC BAA-1060) protein is Isoleucine--tRNA ligase.